The chain runs to 419 residues: MSMLEQMGKAAKQASWQLAMLSTAKKNQALAVIANLLESESQAILQANEQDMAAARDSGMSEALLDRLLLSPARLAAIANDVRQVCRLNDPVGRVIDGSLLDSGLKLERRRVPLGVIGVIYEARPNVTIDVASLCLKTGNAVILRGGKETHHTNQATVKVIQQALEQCGLPPAAVQAIESPDRELVTQLLRMDNYIDMLIPRGGAGLHKLCREQSTIPVITGGIGVCHTFVDESADFEKALLVIENAKIQRPSACNSLETLLVHQEIAARFLPILSDRMHAFGVTLHASPQAMPFLAEGKARVVAVEAADYDDEWLSLDLNVEIVADINAAISHIREHGTSHSDAILTRSLGNAEHFVRAVDSSAVYVNASTRFTDGGQFGLGAEVAVSTQKLHARGPMGLDALTTYKWIGYGDDLVRS.

This sequence belongs to the gamma-glutamyl phosphate reductase family.

The protein localises to the cytoplasm. The enzyme catalyses L-glutamate 5-semialdehyde + phosphate + NADP(+) = L-glutamyl 5-phosphate + NADPH + H(+). It participates in amino-acid biosynthesis; L-proline biosynthesis; L-glutamate 5-semialdehyde from L-glutamate: step 2/2. Catalyzes the NADPH-dependent reduction of L-glutamate 5-phosphate into L-glutamate 5-semialdehyde and phosphate. The product spontaneously undergoes cyclization to form 1-pyrroline-5-carboxylate. The sequence is that of Gamma-glutamyl phosphate reductase from Yersinia enterocolitica serotype O:8 / biotype 1B (strain NCTC 13174 / 8081).